The primary structure comprises 572 residues: Proline--tRNA ligase (572 aa).

This sequence belongs to the class-II aminoacyl-tRNA synthetase family. ProS type 1 subfamily. As to quaternary structure, homodimer.

The protein resides in the cytoplasm. The catalysed reaction is tRNA(Pro) + L-proline + ATP = L-prolyl-tRNA(Pro) + AMP + diphosphate. Catalyzes the attachment of proline to tRNA(Pro) in a two-step reaction: proline is first activated by ATP to form Pro-AMP and then transferred to the acceptor end of tRNA(Pro). As ProRS can inadvertently accommodate and process non-cognate amino acids such as alanine and cysteine, to avoid such errors it has two additional distinct editing activities against alanine. One activity is designated as 'pretransfer' editing and involves the tRNA(Pro)-independent hydrolysis of activated Ala-AMP. The other activity is designated 'posttransfer' editing and involves deacylation of mischarged Ala-tRNA(Pro). The misacylated Cys-tRNA(Pro) is not edited by ProRS. This Yersinia pestis (strain Pestoides F) protein is Proline--tRNA ligase.